Here is a 196-residue protein sequence, read N- to C-terminus: Holliday junction branch migration complex subunit RuvA (196 aa).

Residues 1–69 (MIVGLRGTII…EDAHLLFGFC (69 aa)) are domain I. The domain II stretch occupies residues 70–148 (EEIEKQTFER…QLLQSQEESI (79 aa)). Residues 149–157 (APSNNLKYE) are flexible linker. The tract at residues 157–196 (EASLALQSLGFKRNEIQKVLEHIEALSVSEIVKEALKRLA) is domain III.

It belongs to the RuvA family. In terms of assembly, homotetramer. Forms an RuvA(8)-RuvB(12)-Holliday junction (HJ) complex. HJ DNA is sandwiched between 2 RuvA tetramers; dsDNA enters through RuvA and exits via RuvB. An RuvB hexamer assembles on each DNA strand where it exits the tetramer. Each RuvB hexamer is contacted by two RuvA subunits (via domain III) on 2 adjacent RuvB subunits; this complex drives branch migration. In the full resolvosome a probable DNA-RuvA(4)-RuvB(12)-RuvC(2) complex forms which resolves the HJ.

The protein localises to the cytoplasm. Its function is as follows. The RuvA-RuvB-RuvC complex processes Holliday junction (HJ) DNA during genetic recombination and DNA repair, while the RuvA-RuvB complex plays an important role in the rescue of blocked DNA replication forks via replication fork reversal (RFR). RuvA specifically binds to HJ cruciform DNA, conferring on it an open structure. The RuvB hexamer acts as an ATP-dependent pump, pulling dsDNA into and through the RuvAB complex. HJ branch migration allows RuvC to scan DNA until it finds its consensus sequence, where it cleaves and resolves the cruciform DNA. The sequence is that of Holliday junction branch migration complex subunit RuvA from Helicobacter hepaticus (strain ATCC 51449 / 3B1).